The sequence spans 782 residues: Probable methionine--tRNA ligase, cytoplasmic (782 aa).

The 'HIGH' region signature appears at 231 to 241; sequence PYVNNVPHLGN. Residues 551–555 carry the 'KMSKS' region motif; sequence KFSKS.

It belongs to the class-I aminoacyl-tRNA synthetase family.

It is found in the cytoplasm. It carries out the reaction tRNA(Met) + L-methionine + ATP = L-methionyl-tRNA(Met) + AMP + diphosphate. This is Probable methionine--tRNA ligase, cytoplasmic (rar1) from Schizosaccharomyces pombe (strain 972 / ATCC 24843) (Fission yeast).